We begin with the raw amino-acid sequence, 211 residues long: Protein G12 (211 aa).

The signal sequence occupies residues 1-19; it reads MKIAAFVVACLVATSAVSC.

The protein is Protein G12 of Anopheles gambiae (African malaria mosquito).